Reading from the N-terminus, the 124-residue chain is Glycine cleavage system H protein (124 aa).

Residues 22 to 104 (LIVTGISDHA…YGKGWIYKMK (83 aa)) enclose the Lipoyl-binding domain. Lysine 63 carries the N6-lipoyllysine modification.

This sequence belongs to the GcvH family. The glycine cleavage system is composed of four proteins: P, T, L and H. (R)-lipoate is required as a cofactor.

In terms of biological role, the glycine cleavage system catalyzes the degradation of glycine. The H protein shuttles the methylamine group of glycine from the P protein to the T protein. In Acinetobacter baylyi (strain ATCC 33305 / BD413 / ADP1), this protein is Glycine cleavage system H protein.